Consider the following 231-residue polypeptide: GFP-like fluorescent chromoprotein FP506 (231 aa).

Positions 66 to 68 form a cross-link, 5-imidazolinone (Asn-Gly); it reads NYG. Tyrosine 67 carries the 2,3-didehydrotyrosine modification.

It belongs to the GFP family. In terms of processing, contains a chromophore consisting of modified amino acid residues. The chromophore is formed by autocatalytic backbone condensation between Xaa-N and Gly-(N+2), and oxidation of Tyr-(N+1) to didehydrotyrosine. Maturation of the chromophore requires nothing other than molecular oxygen. The precise stereochemistry of the tyrosine has not been determined. Tentacle and oral disk.

Its function is as follows. Pigment protein that is yellow-green in color. The polypeptide is GFP-like fluorescent chromoprotein FP506 (Zoanthus sp. (Green polyp)).